The sequence spans 256 residues: uncharacterized protein (256 aa).

Disordered regions lie at residues 1–38 (MGKT…PNRD) and 51–75 (PRPS…RCPQ).

This is an uncharacterized protein from Homo sapiens (Human).